Reading from the N-terminus, the 514-residue chain is Pantetheinase (514 aa).

The N-terminal stretch at 1 to 22 (MITSRLLVYVAVLVLCVIKVSS) is a signal peptide. Asn-39 carries an N-linked (GlcNAc...) asparagine glycan. A CN hydrolase domain is found at 40–307 (ATLVPVSHEE…GKLLLSQLDS (268 aa)). Glu-80 (proton acceptor) is an active-site residue. Residues Asn-87 and Asn-147 are each glycosylated (N-linked (GlcNAc...) asparagine). Lys-179 functions as the Proton donor in the catalytic mechanism. Cys-212 serves as the catalytic Nucleophile. N-linked (GlcNAc...) asparagine glycosylation is found at Asn-316 and Asn-354. Residue Asp-492 is the site of GPI-anchor amidated aspartate attachment. The propeptide at 493 to 514 (PRSQVPGVMLLVIIPIVCSLSW) is removed in mature form.

This sequence belongs to the carbon-nitrogen hydrolase superfamily. BTD/VNN family. Monomer.

It localises to the cell membrane. It carries out the reaction (R)-pantetheine + H2O = cysteamine + (R)-pantothenate. In terms of biological role, amidohydrolase that hydrolyzes specifically one of the carboamide linkages in D-pantetheine thus recycling pantothenic acid (vitamin B5) and releasing cysteamine. The protein is Pantetheinase (VNN1) of Canis lupus familiaris (Dog).